The sequence spans 267 residues: Glucosamine-6-phosphate deaminase (267 aa).

Asp72 functions as the Proton acceptor; for enolization step in the catalytic mechanism. Asp141 serves as the catalytic For ring-opening step. His143 serves as the catalytic Proton acceptor; for ring-opening step. Glu148 (for ring-opening step) is an active-site residue.

This sequence belongs to the glucosamine/galactosamine-6-phosphate isomerase family. NagB subfamily. Homohexamer.

It carries out the reaction alpha-D-glucosamine 6-phosphate + H2O = beta-D-fructose 6-phosphate + NH4(+). Its pathway is amino-sugar metabolism; N-acetylneuraminate degradation; D-fructose 6-phosphate from N-acetylneuraminate: step 5/5. Allosterically activated by N-acetylglucosamine 6-phosphate (GlcNAc6P). Catalyzes the reversible isomerization-deamination of glucosamine 6-phosphate (GlcN6P) to form fructose 6-phosphate (Fru6P) and ammonium ion. The chain is Glucosamine-6-phosphate deaminase from Actinobacillus pleuropneumoniae serotype 3 (strain JL03).